We begin with the raw amino-acid sequence, 336 residues long: Abasic site processing protein HMCES (336 aa).

C2 functions as the Nucleophile in the catalytic mechanism. At C2 the chain carries Thiazolidine linkage to a ring-opened DNA abasic site. Basic and acidic residues predominate over residues 29-38 (QPEWLREGRY). The segment at 29 to 52 (QPEWLREGRYRPSYNKGPQSSGPV) is disordered. E127 is an active-site residue. The interval 283 to 336 (LKSSQEGSPQKKEDTLPRWKSQFIHSPSPKKSSAGILRQWLGQEGGPPAKKQKA) is disordered.

It belongs to the SOS response-associated peptidase family.

It is found in the chromosome. Its activity is regulated as follows. Formation and reversal of DNA-protein cross-link depends on DNA context. Catalyzes formation of the thiazolidine linkage in presence of abasic sites in single-stranded DNA. Mediates the reversal of the thiazolidine cross-link in presence of double stranded DNA. Sensor of abasic sites in single-stranded DNA (ssDNA) required to preserve genome integrity by promoting error-free repair of abasic sites. Acts as an enzyme that recognizes and binds abasic sites in ssDNA at replication forks and chemically modifies the lesion by forming a covalent cross-link with DNA: forms a stable thiazolidine linkage between a ring-opened abasic site and the alpha-amino and sulfhydryl substituents of its N-terminal catalytic cysteine residue. The HMCES DNA-protein cross-link is then either reversed or degraded. HMCES is able to catalyze the reversal of its thiazolidine cross-link and cycle between a cross-link and a non-cross-linked state depending on DNA context: mediates self-reversal of the thiazolidine cross-link in double stranded DNA, allowing APEX1 to initiate downstream repair of abasic sites. The HMCES DNA-protein cross-link can also be degraded by the SPRTN metalloprotease following unfolding by the BRIP1/FANCJ helicase. Promotes error-free repair of abasic sites by protecting abasic sites from translesion synthesis (TLS) polymerases and endonucleases that are error-prone and would generate mutations and double-strand breaks. Acts as a protease: mediates autocatalytic processing of its N-terminal methionine in order to expose the catalytic cysteine. The HMCES DNA-protein cross-link is then either reversed or degraded. According to a model, the HMCES DNA-protein cross-link. The chain is Abasic site processing protein HMCES from Gallus gallus (Chicken).